The primary structure comprises 239 residues: Large ribosomal subunit protein eL32 (239 aa).

Composition is skewed to acidic residues over residues 1 to 12 (MSDENDTPEELA) and 67 to 91 (VEADTDAEVEEVGGDDEADTDADVE). 2 disordered regions span residues 1 to 23 (MSDENDTPEELADISGVGPSKAE) and 64 to 178 (GLEV…HPSG). A compositionally biased stretch (basic and acidic residues) spans 92-113 (TELRARGLTEKTPDLSEDEQRL). Over residues 130–155 (YHKKKRTPTSWRRPKGTLSKQRRGIK) the composition is skewed to basic residues.

Belongs to the eukaryotic ribosomal protein eL32 family.

The protein is Large ribosomal subunit protein eL32 (rpl32e) of Halobacterium salinarum (strain ATCC 700922 / JCM 11081 / NRC-1) (Halobacterium halobium).